The sequence spans 601 residues: N-acetyltransferase ESCO2 (601 aa).

A phosphoserine mark is found at Ser-29, Ser-75, Ser-223, and Ser-244. The interval 222 to 243 (SSLENEPSLGRTQKSKSEVIED) is disordered. The span at 282–305 (KEKLIKDSSDDRVSSKEHKVDKNE) shows a compositional bias: basic and acidic residues. The interval 282-315 (KEKLIKDSSDDRVSSKEHKVDKNEAFSSEDSLGE) is disordered. Over residues 306-315 (AFSSEDSLGE) the composition is skewed to polar residues. The residue at position 312 (Ser-312) is a Phosphoserine. The segment at 387–411 (TVCKSCGMIYTASNPEDEMQHVQHH) adopts a CCHH-type zinc-finger fold. Ser-512 carries the post-translational modification Phosphoserine.

Belongs to the acetyltransferase family. ECO subfamily. In terms of tissue distribution, widely expressed in fetal tissues. In adult, it is expressed in thymus, placenta and small intestine.

The protein resides in the nucleus. It localises to the chromosome. It carries out the reaction L-lysyl-[protein] + acetyl-CoA = N(6)-acetyl-L-lysyl-[protein] + CoA + H(+). Its function is as follows. Acetyltransferase required for the establishment of sister chromatid cohesion. Couples the processes of cohesion and DNA replication to ensure that only sister chromatids become paired together. In contrast to the structural cohesins, the deposition and establishment factors are required only during the S phase. Acetylates the cohesin component SMC3. This is N-acetyltransferase ESCO2 from Homo sapiens (Human).